A 104-amino-acid polypeptide reads, in one-letter code: UPF0473 protein LJ_0477 (104 aa).

Belongs to the UPF0473 family.

The polypeptide is UPF0473 protein LJ_0477 (Lactobacillus johnsonii (strain CNCM I-12250 / La1 / NCC 533)).